The chain runs to 787 residues: Disintegrin and metalloproteinase domain-containing protein 32 (787 aa).

A signal peptide spans 1–16; the sequence is MFRLWLLLAGLCGLLA. Phosphoserine is present on Ser-17. The propeptide occupies 17-174; the sequence is SRPGFQNSLL…PMDDNIFISE (158 aa). Residues Asn-39 and Asn-125 are each glycosylated (N-linked (GlcNAc...) asparagine). Residues 175–682 are Extracellular-facing; the sequence is KSEPAVPDLF…ERASGKTENT (508 aa). In terms of domain architecture, Peptidase M12B spans 186 to 383; sequence LYLEMHIVVD…VGVKCLQNKP (198 aa). 4 disulfide bridges follow: Cys-295/Cys-378, Cys-337/Cys-362, Cys-339/Cys-344, and Cys-450/Cys-471. A Disintegrin domain is found at 391–479; the sequence is KPVCGNGRLE…ECGPDITLIN (89 aa). 2 N-linked (GlcNAc...) asparagine glycosylation sites follow: Asn-465 and Asn-598. The 33-residue stretch at 622-654 folds into the EGF-like domain; the sequence is SAHVCSQQCSGHGVCDSRNKCHCSPGYKPPNCQ. Cystine bridges form between Cys-626-Cys-636, Cys-630-Cys-642, and Cys-644-Cys-653. A helical transmembrane segment spans residues 683 to 703; sequence WLLGFLIALPILIVTTAIVLA. Residues 704–787 are Cytoplasmic-facing; it reads RKQLKKWFAK…DSTQTQSSSN (84 aa). Residues 715–787 are disordered; the sequence is EEFPSSESKS…DSTQTQSSSN (73 aa). The span at 728–749 shows a compositional bias: polar residues; that stretch reads TQTYASQSSSEGSTQTYASQTR. The span at 771 to 787 shows a compositional bias: low complexity; that stretch reads TSRSKSQDSTQTQSSSN.

As to expression, testis specific.

It is found in the membrane. Its function is as follows. May play a role in sperm development and fertilization This is a non-catalytic metalloprotease-like protein. This chain is Disintegrin and metalloproteinase domain-containing protein 32 (ADAM32), found in Homo sapiens (Human).